The chain runs to 123 residues: uncharacterized protein (123 aa).

Residues 1-24 (MGGGGPPARVQGTEGSQTGGGAVA) form a disordered region.

This is an uncharacterized protein from Halorubrum pleomorphic virus 1 (HRPV-1).